A 1438-amino-acid chain; its full sequence is DNA-directed RNA polymerase subunit beta' (1438 aa).

Residues cysteine 70, cysteine 72, cysteine 85, and cysteine 88 each contribute to the Zn(2+) site. Mg(2+)-binding residues include aspartate 461, aspartate 463, and aspartate 465. Positions 821, 895, 902, and 905 each coordinate Zn(2+). Over residues 1413–1427 (DAMAAAMGGDSAGGD) the composition is skewed to low complexity. Residues 1413-1438 (DAMAAAMGGDSAGGDTKPEAPEASEE) form a disordered region.

It belongs to the RNA polymerase beta' chain family. In terms of assembly, the RNAP catalytic core consists of 2 alpha, 1 beta, 1 beta' and 1 omega subunit. When a sigma factor is associated with the core the holoenzyme is formed, which can initiate transcription. Mg(2+) serves as cofactor. Zn(2+) is required as a cofactor.

It carries out the reaction RNA(n) + a ribonucleoside 5'-triphosphate = RNA(n+1) + diphosphate. Functionally, DNA-dependent RNA polymerase catalyzes the transcription of DNA into RNA using the four ribonucleoside triphosphates as substrates. The chain is DNA-directed RNA polymerase subunit beta' from Erythrobacter litoralis (strain HTCC2594).